The chain runs to 880 residues: Beta-N-acetylglucosaminidase (880 aa).

The N-terminal stretch at methionine 1–alanine 27 is a signal peptide. SPOR domains lie at serine 70–tyrosine 149, glycine 150–threonine 229, and valine 230–valine 311. Tandem repeats lie at residues isoleucine 439–alanine 473 and isoleucine 479–alanine 513. The 71-residue stretch at threonine 630 to serine 700 folds into the SH3b domain.

The protein belongs to the glycosyl hydrolase 73 family. As to quaternary structure, homodimer.

The protein resides in the secreted. It localises to the cell wall. It catalyses the reaction an N(4)-(oligosaccharide-(1-&gt;3)-[oligosaccharide-(1-&gt;6)]-beta-D-Man-(1-&gt;4)-beta-D-GlcNAc-(1-&gt;4)-alpha-D-GlcNAc)-L-asparaginyl-[protein] + H2O = an oligosaccharide-(1-&gt;3)-[oligosaccharide-(1-&gt;6)]-beta-D-Man-(1-&gt;4)-D-GlcNAc + N(4)-(N-acetyl-beta-D-glucosaminyl)-L-asparaginyl-[protein]. Its activity is regulated as follows. Inhibited by diethyl pyrocarbonate, slightly by EDTA. Not inhibited by PMSF, diisopropyl fluorophosphate, 2-mercaptoethanol or N-ethylmaleimide. Its function is as follows. Cell wall hydrolase not involved in cell autolysis, competence, sporulation or germination. It hydrolyzes the beta-1,4 glycan bond between the N-acetylglucosaminyl and the N-acetylmuramoyl residues in the glycan chain. The sequence is that of Beta-N-acetylglucosaminidase (lytD) from Bacillus subtilis (strain 168).